We begin with the raw amino-acid sequence, 287 residues long: Acetyl-coenzyme A carboxylase carboxyl transferase subunit beta (287 aa).

The region spanning Leu33 to Ala287 is the CoA carboxyltransferase N-terminal domain. 4 residues coordinate Zn(2+): Cys37, Cys40, Cys55, and Cys58. The C4-type zinc-finger motif lies at Cys37–Cys58.

The protein belongs to the AccD/PCCB family. As to quaternary structure, acetyl-CoA carboxylase is a heterohexamer composed of biotin carboxyl carrier protein (AccB), biotin carboxylase (AccC) and two subunits each of ACCase subunit alpha (AccA) and ACCase subunit beta (AccD). Zn(2+) is required as a cofactor.

The protein localises to the cytoplasm. The catalysed reaction is N(6)-carboxybiotinyl-L-lysyl-[protein] + acetyl-CoA = N(6)-biotinyl-L-lysyl-[protein] + malonyl-CoA. It participates in lipid metabolism; malonyl-CoA biosynthesis; malonyl-CoA from acetyl-CoA: step 1/1. Functionally, component of the acetyl coenzyme A carboxylase (ACC) complex. Biotin carboxylase (BC) catalyzes the carboxylation of biotin on its carrier protein (BCCP) and then the CO(2) group is transferred by the transcarboxylase to acetyl-CoA to form malonyl-CoA. The protein is Acetyl-coenzyme A carboxylase carboxyl transferase subunit beta of Streptococcus sanguinis (strain SK36).